Reading from the N-terminus, the 157-residue chain is Large ribosomal subunit protein uL13m (157 aa).

Residues 1–29 constitute a mitochondrion transit peptide; the sequence is MSTLNGQTALAYAKVWHHVSAKNVPLGRL.

Belongs to the universal ribosomal protein uL13 family. Component of the mitochondrial large ribosomal subunit (mt-LSU). Mature yeast 74S mitochondrial ribosomes consist of a small (37S) and a large (54S) subunit. The 37S small subunit contains a 15S ribosomal RNA (15S mt-rRNA) and at least 32 different proteins. The 54S large subunit contains a 21S rRNA (21S mt-rRNA) and at least 45 different proteins.

The protein localises to the mitochondrion. Component of the mitochondrial ribosome (mitoribosome), a dedicated translation machinery responsible for the synthesis of mitochondrial genome-encoded proteins, including at least some of the essential transmembrane subunits of the mitochondrial respiratory chain. The mitoribosomes are attached to the mitochondrial inner membrane and translation products are cotranslationally integrated into the membrane. In Schizosaccharomyces pombe (strain 972 / ATCC 24843) (Fission yeast), this protein is Large ribosomal subunit protein uL13m.